Here is a 453-residue protein sequence, read N- to C-terminus: Keratin, type I cytoskeletal 15 (453 aa).

Residues M1–N102 form a head region. A phosphoserine mark is found at S16, S17, S34, S48, and S56. Residues E103–W138 form a coil 1A region. The IF rod domain maps to E103 to M415. Positions Y139–T157 are linker 1. The interval T158–F249 is coil 1B. Residues S250 to L269 are linker 12. The interval T270–Q411 is coil 2. K298 participates in a covalent cross-link: Glycyl lysine isopeptide (Lys-Gly) (interchain with G-Cter in SUMO2). A phosphothreonine mark is found at T299 and T321. The interval D412–I453 is tail. Residue K444 forms a Glycyl lysine isopeptide (Lys-Gly) (interchain with G-Cter in SUMO1); alternate linkage. K444 participates in a covalent cross-link: Glycyl lysine isopeptide (Lys-Gly) (interchain with G-Cter in SUMO2); alternate.

It belongs to the intermediate filament family. In terms of assembly, heterotetramer of two type I and two type II keratins. Interacts with NOD2. In terms of tissue distribution, expressed in the basal cell layers of several stratified epithelia including esophagus, tongue, stomach, epidermis and hair follicle. In the hair follicle, expression is detected mainly in the basal layer of the outer root sheath (ORS), except just above the follicle bulb where it occurs throughout its thickness. Low expression levels are seen in the single layer of ORS cells around the base of the follicle which increases in the palisade-like cells of the bulb. Also expressed in the basal cells of the sebaceous glands, and expression in the epidermis occurs in a punctate pattern.

The protein is Keratin, type I cytoskeletal 15 of Ovis aries (Sheep).